We begin with the raw amino-acid sequence, 576 residues long: CDPK-related kinase 1 (576 aa).

The segment at 1–39 is disordered; sequence MGICHGKPVEQQSKSLPVSGETNEAPTNSQPPAKSSGFP. G2 carries the N-myristoyl glycine lipid modification. Polar residues predominate over residues 10–33; sequence EQQSKSLPVSGETNEAPTNSQPPA. The Protein kinase domain occupies 123 to 385; the sequence is YEIDGEVGRG…AAQALCHPWL (263 aa). Residues 129–137 and K155 each bind ATP; that span reads VGRGHFGYT. D251 acts as the Proton acceptor in catalysis. S291 is subject to Phosphoserine. Position 333 is a phosphoserine; by CPK1 and CPK34 (S333). Residues 390–420 form an autoinhibitory domain region; sequence ELKIPSDMIIYKLVKVYIMSTSLRKSALAAL. The interval 409–429 is calmodulin binding (CaMBD); the sequence is STSLRKSALAALAKTLTVPQL. 4 EF-hand domains span residues 427-463, 464-499, 500-539, and 542-571; these read PQLA…STDA, MKDS…VYQL, EAME…GPSV, and HVVL…VSSR. Positions 442, 444, 446, 483, 488, 519, 521, 528, 553, and 555 each coordinate Ca(2+). At S557 the chain carries Phosphoserine.

The protein belongs to the protein kinase superfamily. Ser/Thr protein kinase family. CDPK subfamily. Binds calmodulin (CaM) in a calcium-dependent manner. Interacts with HSFA1A. Autophosphorylated.

It is found in the membrane. It carries out the reaction L-seryl-[protein] + ATP = O-phospho-L-seryl-[protein] + ADP + H(+). The catalysed reaction is L-threonyl-[protein] + ATP = O-phospho-L-threonyl-[protein] + ADP + H(+). Its activity is regulated as follows. Activated by calcium and calmodulin. Autophosphorylation may play an important role in the regulation of the kinase activity. Functionally, may play a role in signal transduction pathways that involve calcium as a second messenger. Serine/threonine kinase that phosphorylates histone H3. Confers thermotolerance; involved in the heat-shock-mediated calmodulin-dependent signal transduction leading to the activation of heat-shock transcription factors (HSFs); phosphorylates HSFA1A. The chain is CDPK-related kinase 1 (CRK1) from Arabidopsis thaliana (Mouse-ear cress).